The following is a 466-amino-acid chain: Glutamate decarboxylase (466 aa).

Residue Lys-277 is modified to N6-(pyridoxal phosphate)lysine.

Belongs to the group II decarboxylase family. Pyridoxal 5'-phosphate serves as cofactor.

The enzyme catalyses L-glutamate + H(+) = 4-aminobutanoate + CO2. Converts internalized glutamate to GABA and increases the internal pH. Involved in glutamate-dependent acid resistance. This Lactococcus lactis subsp. cremoris (strain MG1363) protein is Glutamate decarboxylase (gadB).